We begin with the raw amino-acid sequence, 155 residues long: Large ribosomal subunit protein uL13 (155 aa).

It belongs to the universal ribosomal protein uL13 family. As to quaternary structure, part of the 50S ribosomal subunit.

Functionally, this protein is one of the early assembly proteins of the 50S ribosomal subunit, although it is not seen to bind rRNA by itself. It is important during the early stages of 50S assembly. This chain is Large ribosomal subunit protein uL13, found in Rickettsia akari (strain Hartford).